Reading from the N-terminus, the 178-residue chain is Ribose 1,5-bisphosphate phosphokinase PhnN (178 aa).

9-16 (GPSGSGKD) serves as a coordination point for ATP.

This sequence belongs to the ribose 1,5-bisphosphokinase family.

The enzyme catalyses alpha-D-ribose 1,5-bisphosphate + ATP = 5-phospho-alpha-D-ribose 1-diphosphate + ADP. It functions in the pathway metabolic intermediate biosynthesis; 5-phospho-alpha-D-ribose 1-diphosphate biosynthesis; 5-phospho-alpha-D-ribose 1-diphosphate from D-ribose 5-phosphate (route II): step 3/3. Its function is as follows. Catalyzes the phosphorylation of ribose 1,5-bisphosphate to 5-phospho-D-ribosyl alpha-1-diphosphate (PRPP). The sequence is that of Ribose 1,5-bisphosphate phosphokinase PhnN from Pantoea vagans (strain C9-1) (Pantoea agglomerans (strain C9-1)).